A 189-amino-acid chain; its full sequence is Segregation and condensation protein B (189 aa).

The protein belongs to the ScpB family. In terms of assembly, homodimer. Homodimerization may be required to stabilize the binding of ScpA to the Smc head domains. Component of a cohesin-like complex composed of ScpA, ScpB and the Smc homodimer, in which ScpA and ScpB bind to the head domain of Smc. The presence of the three proteins is required for the association of the complex with DNA.

The protein localises to the cytoplasm. Its function is as follows. Participates in chromosomal partition during cell division. May act via the formation of a condensin-like complex containing Smc and ScpA that pull DNA away from mid-cell into both cell halves. This chain is Segregation and condensation protein B, found in Streptococcus pneumoniae serotype 19F (strain G54).